A 130-amino-acid chain; its full sequence is Transcription antitermination protein NusB (130 aa).

It belongs to the NusB family.

In terms of biological role, involved in transcription antitermination. Required for transcription of ribosomal RNA (rRNA) genes. Binds specifically to the boxA antiterminator sequence of the ribosomal RNA (rrn) operons. The polypeptide is Transcription antitermination protein NusB (Bacillus mycoides (strain KBAB4) (Bacillus weihenstephanensis)).